The chain runs to 498 residues: Protein MGF 505-5R (498 aa).

This sequence belongs to the asfivirus MGF 505 family.

Its function is as follows. Plays a role in virus cell tropism, and may be required for efficient virus replication in macrophages. The sequence is that of Protein MGF 505-5R from Ornithodoros (relapsing fever ticks).